A 360-amino-acid chain; its full sequence is Spore germination protein GerQB (360 aa).

10 helical membrane passes run 11 to 31 (SPYMVFFLIITIQMGVGMLGF), 45 to 65 (ISTLLFGISVNVMIWIIYQIL), 84 to 104 (IGGLLNFIFLSYIVLLGATTL), 116 to 136 (FPSISSWVIAGAFLGLCYYIV), 142 to 162 (VVAGIGFFGIVIPSILIFTFF), 188 to 208 (MKGNMFSFFGFEMLLLYYPFI), 220 to 240 (YANLVTTIVYTYLMILTLAFF), 270 to 290 (IIVSVWAFFILPNVSFTLWGV), 300 to 320 (IKQKYVLPVIILFIFILSFFL), and 331 to 351 (TWTGQIGFVYIYVYLPVLWLI).

It belongs to the amino acid-polyamine-organocation (APC) superfamily. Spore germination protein (SGP) (TC 2.A.3.9) family.

The protein localises to the membrane. In terms of biological role, required for the germination response to inosine. Has no role in L-alanine germination. This chain is Spore germination protein GerQB (gerQB), found in Bacillus cereus.